A 601-amino-acid polypeptide reads, in one-letter code: ATP-dependent RNA helicase DeaD (601 aa).

The short motif at 6–34 (STFSFLGLNPFIIQSLNEMGYVKPSPIQA) is the Q motif element. A Helicase ATP-binding domain is found at 37–208 (IPLLLEGRDV…KRFMRNPKEI (172 aa)). ATP is bound at residue 50–57 (AQTGSGKT). The DEAD box signature appears at 156–159 (DEAD). The region spanning 231–378 (KTDALIRFLE…EVQLPKVELL (148 aa)) is the Helicase C-terminal domain. The span at 552 to 576 (SRHYENKTTHRSIFNKDKNSNRRVS) shows a compositional bias: basic and acidic residues. The disordered stretch occupies residues 552-601 (SRHYENKTTHRSIFNKDKNSNRRVSDGSFNKSNSPKKTEFKSSFFRRRNV).

It belongs to the DEAD box helicase family. DeaD/CsdA subfamily.

Its subcellular location is the cytoplasm. The enzyme catalyses ATP + H2O = ADP + phosphate + H(+). Functionally, DEAD-box RNA helicase involved in various cellular processes at low temperature, including ribosome biogenesis, mRNA degradation and translation initiation. The polypeptide is ATP-dependent RNA helicase DeaD (Buchnera aphidicola subsp. Acyrthosiphon pisum (strain APS) (Acyrthosiphon pisum symbiotic bacterium)).